The following is a 319-amino-acid chain: 4-hydroxy-3-methylbut-2-enyl diphosphate reductase (319 aa).

[4Fe-4S] cluster is bound at residue Cys17. Residues His46 and His79 each contribute to the (2E)-4-hydroxy-3-methylbut-2-enyl diphosphate site. Dimethylallyl diphosphate contacts are provided by His46 and His79. Positions 46 and 79 each coordinate isopentenyl diphosphate. Cys101 contributes to the [4Fe-4S] cluster binding site. His129 contributes to the (2E)-4-hydroxy-3-methylbut-2-enyl diphosphate binding site. His129 is a dimethylallyl diphosphate binding site. His129 contributes to the isopentenyl diphosphate binding site. Glu131 serves as the catalytic Proton donor. A (2E)-4-hydroxy-3-methylbut-2-enyl diphosphate-binding site is contributed by Thr170. Cys200 lines the [4Fe-4S] cluster pocket. (2E)-4-hydroxy-3-methylbut-2-enyl diphosphate contacts are provided by Ser228, Ser229, Asn230, and Ser273. Residues Ser228, Ser229, Asn230, and Ser273 each contribute to the dimethylallyl diphosphate site. Residues Ser228, Ser229, Asn230, and Ser273 each contribute to the isopentenyl diphosphate site.

It belongs to the IspH family. The cofactor is [4Fe-4S] cluster.

The enzyme catalyses isopentenyl diphosphate + 2 oxidized [2Fe-2S]-[ferredoxin] + H2O = (2E)-4-hydroxy-3-methylbut-2-enyl diphosphate + 2 reduced [2Fe-2S]-[ferredoxin] + 2 H(+). It catalyses the reaction dimethylallyl diphosphate + 2 oxidized [2Fe-2S]-[ferredoxin] + H2O = (2E)-4-hydroxy-3-methylbut-2-enyl diphosphate + 2 reduced [2Fe-2S]-[ferredoxin] + 2 H(+). The protein operates within isoprenoid biosynthesis; dimethylallyl diphosphate biosynthesis; dimethylallyl diphosphate from (2E)-4-hydroxy-3-methylbutenyl diphosphate: step 1/1. Its pathway is isoprenoid biosynthesis; isopentenyl diphosphate biosynthesis via DXP pathway; isopentenyl diphosphate from 1-deoxy-D-xylulose 5-phosphate: step 6/6. Its function is as follows. Catalyzes the conversion of 1-hydroxy-2-methyl-2-(E)-butenyl 4-diphosphate (HMBPP) into a mixture of isopentenyl diphosphate (IPP) and dimethylallyl diphosphate (DMAPP). Acts in the terminal step of the DOXP/MEP pathway for isoprenoid precursor biosynthesis. The protein is 4-hydroxy-3-methylbut-2-enyl diphosphate reductase of Cereibacter sphaeroides (strain ATCC 17029 / ATH 2.4.9) (Rhodobacter sphaeroides).